The primary structure comprises 394 residues: [Pyruvate dehydrogenase (acetyl-transferring)] kinase 1, mitochondrial (394 aa).

Residues 1 to 20 (MWKIMRSWKCGGMRWAHRQR) constitute a mitochondrion transit peptide. Residues 126–386 (AYPYELHNPP…DVYIKLKGPS (261 aa)) enclose the Histidine kinase domain. His148 is modified (phosphohistidine; by autocatalysis). Residues 267–274 (EVFKNAFE), Asp304, 323–324 (ST), and 347–352 (GMGFGL) contribute to the ATP site.

Belongs to the PDK/BCKDK protein kinase family. As to quaternary structure, interacts with PKP2.

The protein resides in the mitochondrion matrix. It catalyses the reaction L-seryl-[pyruvate dehydrogenase E1 alpha subunit] + ATP = O-phospho-L-seryl-[pyruvate dehydrogenase E1 alpha subunit] + ADP + H(+). Its function is as follows. Inhibits the mitochondrial pyruvate dehydrogenase complex by phosphorylation of the E1 alpha subunit (PDA1), thus contributing to the regulation of glucose metabolism. Also involved in telomere maintenance. The chain is [Pyruvate dehydrogenase (acetyl-transferring)] kinase 1, mitochondrial from Saccharomyces cerevisiae (strain ATCC 204508 / S288c) (Baker's yeast).